The following is a 113-amino-acid chain: Colipase (113 aa).

The first 18 residues, 1-18, serve as a signal peptide directing secretion; that stretch reads MEKVLVLLLVSLLAVAYA. Positions 19–23 are cleaved as a propeptide — enterostatin, activation peptide; that stretch reads APGPR. 5 disulfide bridges follow: C35-C46, C41-C57, C45-C79, C67-C87, and C81-C105.

It belongs to the colipase family. In terms of assembly, forms a 1:1 stoichiometric complex with pancreatic lipase. Expressed by the pancreas.

The protein resides in the secreted. Its function is as follows. Colipase is a cofactor of pancreatic lipase. It allows the lipase to anchor itself to the lipid-water interface. Without colipase the enzyme is washed off by bile salts, which have an inhibitory effect on the lipase. Functionally, enterostatin has a biological activity as a satiety signal. This Mus musculus (Mouse) protein is Colipase.